Here is a 121-residue protein sequence, read N- to C-terminus: Large ribosomal subunit protein bL12 (121 aa).

This sequence belongs to the bacterial ribosomal protein bL12 family. Homodimer. Part of the ribosomal stalk of the 50S ribosomal subunit. Forms a multimeric L10(L12)X complex, where L10 forms an elongated spine to which 2 to 4 L12 dimers bind in a sequential fashion. Binds GTP-bound translation factors.

Functionally, forms part of the ribosomal stalk which helps the ribosome interact with GTP-bound translation factors. Is thus essential for accurate translation. This Pseudomonas fluorescens (strain Pf0-1) protein is Large ribosomal subunit protein bL12.